The sequence spans 156 residues: Small ribosomal subunit protein uS7 (156 aa).

Belongs to the universal ribosomal protein uS7 family. Part of the 30S ribosomal subunit. Contacts proteins S9 and S11.

Its function is as follows. One of the primary rRNA binding proteins, it binds directly to 16S rRNA where it nucleates assembly of the head domain of the 30S subunit. Is located at the subunit interface close to the decoding center, probably blocks exit of the E-site tRNA. This is Small ribosomal subunit protein uS7 from Allorhizobium ampelinum (strain ATCC BAA-846 / DSM 112012 / S4) (Agrobacterium vitis (strain S4)).